A 393-amino-acid polypeptide reads, in one-letter code: Beta-1,4-galactosyltransferase 3 (393 aa).

The Cytoplasmic portion of the chain corresponds to 1–10 (MLRRLLERPC). The chain crosses the membrane as a helical; Signal-anchor for type II membrane protein span at residues 11-31 (TLALLVGSQLAVMMYLSLGGF). The Lumenal segment spans residues 32 to 393 (RSLSALFGRD…ANHTALRGSH (362 aa)). The N-linked (GlcNAc...) asparagine glycan is linked to N57. Cysteines 77 and 119 form a disulfide. Residue 130–134 (PHRAR) coordinates UDP-alpha-D-galactose. Residue N166 is glycosylated (N-linked (GlcNAc...) asparagine). UDP-alpha-D-galactose-binding positions include 169-171 (FNR), 196-197 (VD), Y226, and W258. A disulfide bond links C190 and C209. Position 197 (D197) interacts with Mn(2+). 260–263 (GEDD) is an N-acetyl-D-glucosamine binding site. A Mn(2+)-binding site is contributed by H291. UDP-alpha-D-galactose is bound at residue 291–293 (HRG). An N-acetyl-D-glucosamine-binding site is contributed by R303. N-linked (GlcNAc...) asparagine glycosylation is found at N337 and N385. The interval 339–393 (TADIGTDPRGPRAPSGPRYPPGSSQAFRQEMLQRRPPARPGPLSTANHTALRGSH) is disordered.

Belongs to the glycosyltransferase 7 family. It depends on Mn(2+) as a cofactor. As to expression, found in various tissues. Highest expression in placenta, prostate, testis, ovary, intestine and muscle, and in fetal brain.

Its subcellular location is the golgi apparatus. The protein resides in the golgi stack membrane. The enzyme catalyses an N-acetyl-beta-D-glucosaminyl derivative + UDP-alpha-D-galactose = a beta-D-galactosyl-(1-&gt;4)-N-acetyl-beta-D-glucosaminyl derivative + UDP + H(+). The catalysed reaction is N-acetyl-D-glucosamine + UDP-alpha-D-galactose = beta-D-galactosyl-(1-&gt;4)-N-acetyl-D-glucosamine + UDP + H(+). It carries out the reaction a beta-D-GlcNAc-(1-&gt;3)-beta-D-Gal-(1-&gt;4)-beta-D-Glc-(1&lt;-&gt;1)-Cer(d18:1(4E)) + UDP-alpha-D-galactose = a neolactoside nLc4Cer(d18:1(4E)) + UDP + H(+). It catalyses the reaction a beta-D-glucosylceramide + UDP-alpha-D-galactose = a beta-D-galactosyl-(1-&gt;4)-beta-D-glucosyl-(1&lt;-&gt;1)-ceramide + UDP + H(+). The enzyme catalyses a neolactoside IV(3)-beta-GlcNAc-nLc4Cer + UDP-alpha-D-galactose = a neolactoside nLc6Cer + UDP + H(+). It participates in protein modification; protein glycosylation. In terms of biological role, responsible for the synthesis of complex-type N-linked oligosaccharides in many glycoproteins as well as the carbohydrate moieties of glycolipids. The chain is Beta-1,4-galactosyltransferase 3 from Homo sapiens (Human).